The following is a 121-amino-acid chain: MVHMHITAWALGLILFFVAYSLYSAGRKGKGVHMGLRLMYIIIIVTGFMLYMSIVKTATGSMHMWYGLKMLTGILVIGGMEMVLVKMSKNKPTGAVWGLFIVALVAVFYLGLKLPIGWKVF.

4 helical membrane-spanning segments follow: residues 6-26 (ITAW…YSAG), 38-58 (LMYI…VKTA), 65-85 (WYGL…MVLV), and 92-112 (PTGA…YLGL).

The protein belongs to the UPF0344 family.

Its subcellular location is the cell membrane. The polypeptide is UPF0344 protein BCG9842_B4136 (Bacillus cereus (strain G9842)).